A 61-amino-acid chain; its full sequence is Sec-independent protein translocase protein TatA (61 aa).

A helical membrane pass occupies residues 1-21 (MFGLGITEILLILGIIILIFG).

The protein belongs to the TatA/E family. In terms of assembly, the Tat system comprises two distinct complexes: a TatABC complex, containing multiple copies of TatA, TatB and TatC subunits, and a separate TatA complex, containing only TatA subunits. Substrates initially bind to the TatABC complex, which probably triggers association of the separate TatA complex to form the active translocon.

The protein resides in the cell inner membrane. Functionally, part of the twin-arginine translocation (Tat) system that transports large folded proteins containing a characteristic twin-arginine motif in their signal peptide across membranes. TatA could form the protein-conducting channel of the Tat system. This is Sec-independent protein translocase protein TatA from Maridesulfovibrio salexigens (strain ATCC 14822 / DSM 2638 / NCIMB 8403 / VKM B-1763) (Desulfovibrio salexigens).